The sequence spans 243 residues: Carboxy-S-adenosyl-L-methionine synthase (243 aa).

S-adenosyl-L-methionine contacts are provided by residues tyrosine 40, 65 to 67, 90 to 91, 118 to 119, asparagine 133, and arginine 200; these read GCS, DN, and DI.

The protein belongs to the class I-like SAM-binding methyltransferase superfamily. Cx-SAM synthase family. Homodimer.

The enzyme catalyses prephenate + S-adenosyl-L-methionine = carboxy-S-adenosyl-L-methionine + 3-phenylpyruvate + H2O. Functionally, catalyzes the conversion of S-adenosyl-L-methionine (SAM) to carboxy-S-adenosyl-L-methionine (Cx-SAM). The protein is Carboxy-S-adenosyl-L-methionine synthase of Shewanella loihica (strain ATCC BAA-1088 / PV-4).